The sequence spans 156 residues: UPF0039 protein Mb2876c (156 aa).

In terms of domain architecture, N-acetyltransferase spans 8-150 (VWAKDLDARA…PHVPMLRPGS (143 aa)).

It belongs to the UPF0039 (ElaA) family.

This chain is UPF0039 protein Mb2876c, found in Mycobacterium bovis (strain ATCC BAA-935 / AF2122/97).